A 972-amino-acid polypeptide reads, in one-letter code: Structural polyprotein (972 aa).

Aspartate 26 serves as a coordination point for a divalent metal cation. The region spanning 509–734 (SGGPDGKFSR…YLGELMASNA (226 aa)) is the Peptidase S50 domain. Serine 633 serves as the catalytic Nucleophile. Residue lysine 674 is part of the active site. Disordered stretches follow at residues 794-817 (KLIS…AQEA) and 916-972 (NGGR…NAEV). Residues 801 to 817 (KHPEKPKGPDQHHAQEA) are compositionally biased toward basic and acidic residues. A compositionally biased stretch (polar residues) spans 963 to 972 (FTPSGDNAEV).

In terms of assembly, homotrimer. A central divalent metal (possibly cobalt) stabilizes the VP2 trimer. As to quaternary structure, homodimer. interacts (via C-terminus) with VP1 in the cytoplasm. Interacts with VP2. In terms of processing, specific enzymatic cleavages yield mature proteins. The capsid assembly seems to be regulated by polyprotein processing. The protease VP4 cleaves itself off the polyprotein, thus releasing pre-VP2 and VP3 within the infected cell. During capsid assembly, the C-terminus of pre-VP2 is further processed by VP4, giving rise to VP2, the external capsid protein and three small peptides that all stay closely associated with the capsid.

The protein localises to the virion. Its subcellular location is the host cytoplasm. Its function is as follows. Capsid protein VP2 self assembles to form an icosahedral capsid with a T=13 symmetry, about 70 nm in diameter, and consisting of 260 VP2 trimers. The capsid encapsulates the genomic dsRNA. VP2 is also involved in attachment and entry into the host cell. The precursor of VP2 plays an important role in capsid assembly. First, pre-VP2 and VP2 oligomers assemble to form a procapsid. Then, the pre-VP2 intermediates may be processed into VP2 proteins by proteolytic cleavage mediated by VP4 to obtain the mature virion. The final capsid is composed of pentamers and hexamers but VP2 has a natural tendency to assemble into all-pentameric structures. Therefore pre-VP2 may be required to allow formation of the hexameric structures. Functionally, protease VP4 is a serine protease that cleaves the polyprotein into its final products. Pre-VP2 is first partially cleaved, and may be completely processed by VP4 upon capsid maturation. In terms of biological role, capsid protein VP3 plays a key role in virion assembly by providing a scaffold for the capsid made of VP2. May self-assemble to form a T=4-like icosahedral inner-capsid composed of at least 180 trimers. Plays a role in genomic RNA packaging by recruiting VP1 into the capsid and interacting with the dsRNA genome segments to form a ribonucleoprotein complex. Additionally, the interaction of the VP3 C-terminal tail with VP1 removes the inherent structural blockade of the polymerase active site. Thus, VP3 can also function as a transcriptional activator. Its function is as follows. Structural peptide 1 is a small peptide derived from pre-VP2 C-terminus. It destabilizes and perforates cell membranes, suggesting a role during entry. Structural peptide 2 is a small peptide derived from pVP2 C-terminus. It is not essential for the virus viability, but viral growth is affected when missing. Functionally, structural peptide 3 is a small peptide derived from pVP2 C-terminus. It is not essential for the virus viability, but viral growth is affected when missing. The protein is Structural polyprotein of Infectious pancreatic necrosis virus (strain Sp) (IPNV).